Consider the following 45-residue polypeptide: Large ribosomal subunit protein bL34 (45 aa).

Positions 1–45 (MTKRTFQPNNRRRARKHGFRARMRTRAGRAILSARRGKNRAELSA) are disordered. Basic residues predominate over residues 10–27 (NRRRARKHGFRARMRTRA).

Belongs to the bacterial ribosomal protein bL34 family.

This Micrococcus luteus (strain ATCC 4698 / DSM 20030 / JCM 1464 / CCM 169 / CCUG 5858 / IAM 1056 / NBRC 3333 / NCIMB 9278 / NCTC 2665 / VKM Ac-2230) (Micrococcus lysodeikticus) protein is Large ribosomal subunit protein bL34.